The sequence spans 95 residues: MSTHNNSPKEKPVDMNNISEKLDVVNNAPEKPAGANHIPEKLAEMTSSEWIAEYWKGINRGNDVPCCCPRKMTSADKKFSVFGKGYLMRSMQKDD.

Belongs to the asfivirus DP96R family.

In terms of biological role, inhibits cGAS-STING-mediated type I IFN expression and NF-kB activation by inhibiting TBK1 and IKBKB/IKKB. Inhibits host TBK1 phosphorylation. This chain is TBK1 inhibitor DP96R, found in Ornithodoros (relapsing fever ticks).